Here is a 67-residue protein sequence, read N- to C-terminus: Alpha-like toxin Lqh3 (67 aa).

The region spanning 2–66 is the LCN-type CS-alpha/beta domain; that stretch reads RDGYIAQPEN…GIIVEGEKCH (65 aa). Cystine bridges form between Cys12–Cys65, Cys16–Cys37, Cys23–Cys47, and Cys27–Cys49. The residue at position 67 (Ser67) is a Serine amide.

It belongs to the long (4 C-C) scorpion toxin superfamily. Sodium channel inhibitor family. Alpha subfamily. As to quaternary structure, monomer. Expressed by the venom gland.

Its subcellular location is the secreted. Functionally, alpha toxins bind voltage-independently at site-3 of sodium channels (Nav) and inhibit the inactivation of the activated channels, thereby blocking neuronal transmission. The dissociation is voltage-dependent. This alpha-like toxin is highly toxic to insects and competes with LqhaIT on binding to insect sodium channels. Differs from classical anti-mammalian alpha-toxins as it inhibits sodium channel inactivation in cell bodies of hippocampus brain neurons, on which the anti-mammalian Lqh2 is inactive, and is unable to affect Nav1.2 in the rat brain, on which Lqh2 is highly active. Moreover, its pharmacological properties are unique in that its binding affinity for insect channels drops &gt;30-fold at pH 8.5 versus pH 6.5, and its rate of association with receptor site-3 on both insect and mammalian sodium channels is 4-15-fold slower compared with LqhaIT and Lqh2. In Leiurus hebraeus (Hebrew deathstalker scorpion), this protein is Alpha-like toxin Lqh3.